Consider the following 329-residue polypeptide: Neuropeptides B/W receptor type 1 (329 aa).

Residues 1–43 (MHNLTLFESGGDNVSCGGSSLGCPNGSSLAPLPLPQPLAVAVP) are Extracellular-facing. 3 N-linked (GlcNAc...) asparagine glycosylation sites follow: Asn3, Asn13, and Asn25. A helical transmembrane segment spans residues 44–64 (VVYGVICAVGLAGNSAVLYVL). The Cytoplasmic portion of the chain corresponds to 65 to 75 (LRTPRMKTVTN). A helical membrane pass occupies residues 76–96 (VFILNLAIADELFTLVLPINI). The Extracellular portion of the chain corresponds to 97–112 (ADFLLRRWPFGEVMCK). Cys111 and Cys190 are oxidised to a cystine. Residues 113–133 (LIVAVDQYNTFSSLYFLAVMS) traverse the membrane as a helical segment. Over 134–158 (ADRYLVVLATAESRRVSGRTYGAAR) the chain is Cytoplasmic. A helical transmembrane segment spans residues 159–179 (AVSLAVWALVTLVVLPFAVFA). Residues 180–209 (RLDEEQGRRQCVLVFPQPEAFWWRASRLYT) lie on the Extracellular side of the membrane. A helical membrane pass occupies residues 210–230 (LVLGFAIPVTTICALYTTLLC). The Cytoplasmic segment spans residues 231-250 (RLRAIQLDSHAKALDRAKKR). A helical membrane pass occupies residues 251-271 (VTLLVAAILAVCLLCWTPYHL). Residues 272–289 (STIVALTTDLPQTPLVIG) are Extracellular-facing. A helical membrane pass occupies residues 290–312 (ISYFITSLSYANSCLNPFLYAFL). Residues 313-329 (DDSFRRSLRQLVSCRSA) lie on the Cytoplasmic side of the membrane.

It belongs to the G-protein coupled receptor 1 family.

The protein localises to the cell membrane. Functionally, interacts specifically with a number of opioid ligands. Receptor for neuropeptides B and W, which may be involved in neuroendocrine system regulation, food intake and the organization of other signals. This Mus musculus (Mouse) protein is Neuropeptides B/W receptor type 1 (Npbwr1).